The following is a 251-amino-acid chain: Hydroxyacylglutathione hydrolase (251 aa).

Zn(2+) is bound by residues H59, H61, D63, H64, H118, D141, and H179.

The protein belongs to the metallo-beta-lactamase superfamily. Glyoxalase II family. As to quaternary structure, monomer. Requires Zn(2+) as cofactor.

It catalyses the reaction an S-(2-hydroxyacyl)glutathione + H2O = a 2-hydroxy carboxylate + glutathione + H(+). It functions in the pathway secondary metabolite metabolism; methylglyoxal degradation; (R)-lactate from methylglyoxal: step 2/2. Its function is as follows. Thiolesterase that catalyzes the hydrolysis of S-D-lactoyl-glutathione to form glutathione and D-lactic acid. In Prochlorococcus marinus (strain NATL1A), this protein is Hydroxyacylglutathione hydrolase.